Reading from the N-terminus, the 200-residue chain is Dephospho-CoA kinase (200 aa).

Positions 4–200 (TIGLTGSVAT…TFIERFVNNK (197 aa)) constitute a DPCK domain. 12 to 17 (ATGKST) contributes to the ATP binding site.

It belongs to the CoaE family.

It is found in the cytoplasm. It catalyses the reaction 3'-dephospho-CoA + ATP = ADP + CoA + H(+). The protein operates within cofactor biosynthesis; coenzyme A biosynthesis; CoA from (R)-pantothenate: step 5/5. Catalyzes the phosphorylation of the 3'-hydroxyl group of dephosphocoenzyme A to form coenzyme A. The chain is Dephospho-CoA kinase from Listeria innocua serovar 6a (strain ATCC BAA-680 / CLIP 11262).